Here is a 1243-residue protein sequence, read N- to C-terminus: Interphotoreceptor matrix proteoglycan 2 (1243 aa).

The signal sequence occupies residues methionine 1–alanine 27. Residues serine 28–glycine 1106 lie on the Extracellular side of the membrane. The segment at glycine 205–alanine 234 is disordered. Positions alanine 207–serine 220 are enriched in low complexity. The span at asparagine 221 to proline 230 shows a compositional bias: polar residues. An N-linked (GlcNAc...) asparagine glycan is attached at asparagine 225. Residues alanine 235 to asparagine 349 enclose the SEA 1 domain. Positions arginine 255–arginine 263 are hyaluronan-binding motif involved in chondroitin sulfate A-binding. N-linked (GlcNAc...) asparagine glycosylation is found at asparagine 297, asparagine 316, and asparagine 366. 3 O-linked (GalNAc...) threonine glycosylation sites follow: threonine 427, threonine 428, and threonine 429. Asparagine 582 is a glycosylation site (N-linked (GlcNAc...) asparagine). Residues threonine 701, threonine 704, and threonine 712 are each glycosylated (O-linked (GalNAc...) threonine). Positions glutamate 748–aspartate 762 are enriched in basic and acidic residues. Residues glutamate 748–serine 768 form a disordered region. O-linked (GalNAc...) threonine glycans are attached at residues threonine 817 and threonine 888. The 114-residue stretch at glycine 900–glutamate 1013 folds into the SEA 2 domain. 2 N-linked (GlcNAc...) asparagine glycosylation sites follow: asparagine 945 and asparagine 959. EGF-like domains lie at glutamate 1013–glutamine 1054 and serine 1055–glutamate 1096. 6 cysteine pairs are disulfide-bonded: cysteine 1017/cysteine 1028, cysteine 1022/cysteine 1039, cysteine 1041/cysteine 1053, cysteine 1057/cysteine 1070, cysteine 1064/cysteine 1080, and cysteine 1082/cysteine 1095. The segment at arginine 1083 to arginine 1091 is hyaluronan-binding motif involved in chondroitin sulfate C-binding. Residues isoleucine 1107–valine 1127 form a helical membrane-spanning segment. The tract at residues lysine 1128–arginine 1136 is hyaluronan-binding motif involved in chondroitin sulfate A- and C-binding. Over lysine 1128 to leucine 1243 the chain is Cytoplasmic. The hyaluronan-binding motif involved in chondroitin sulfate C-binding stretch occupies residues arginine 1139–arginine 1147. The tract at residues lysine 1212–arginine 1220 is hyaluronan-binding motif involved in chondroitin sulfate A- and C-binding motif.

In terms of tissue distribution, expressed in the retina (at protein level). Expressed in the pineal gland.

Its subcellular location is the photoreceptor outer segment membrane. It is found in the photoreceptor inner segment membrane. The protein localises to the secreted. It localises to the extracellular space. The protein resides in the extracellular matrix. Its subcellular location is the interphotoreceptor matrix. In terms of biological role, chondroitin sulfate- and hyaluronan-binding proteoglycan involved in the organization of interphotoreceptor matrix; may participate in the maturation and maintenance of the light-sensitive photoreceptor outer segment. Binds heparin. The protein is Interphotoreceptor matrix proteoglycan 2 (Impg2) of Mus musculus (Mouse).